The primary structure comprises 197 residues: Imidazoleglycerol-phosphate dehydratase (197 aa).

It belongs to the imidazoleglycerol-phosphate dehydratase family.

It localises to the cytoplasm. The enzyme catalyses D-erythro-1-(imidazol-4-yl)glycerol 3-phosphate = 3-(imidazol-4-yl)-2-oxopropyl phosphate + H2O. Its pathway is amino-acid biosynthesis; L-histidine biosynthesis; L-histidine from 5-phospho-alpha-D-ribose 1-diphosphate: step 6/9. The polypeptide is Imidazoleglycerol-phosphate dehydratase (Marinobacter nauticus (strain ATCC 700491 / DSM 11845 / VT8) (Marinobacter aquaeolei)).